A 502-amino-acid chain; its full sequence is Histidine--tRNA ligase (502 aa).

This sequence belongs to the class-II aminoacyl-tRNA synthetase family. In terms of assembly, homodimer.

It is found in the cytoplasm. The catalysed reaction is tRNA(His) + L-histidine + ATP = L-histidyl-tRNA(His) + AMP + diphosphate + H(+). The sequence is that of Histidine--tRNA ligase from Brucella abortus (strain S19).